A 201-amino-acid chain; its full sequence is Small ribosomal subunit protein uS4c (201 aa).

The S4 RNA-binding domain maps to 90 to 153 (MRLDNVIFRL…SSQNLVKRYL (64 aa)).

The protein belongs to the universal ribosomal protein uS4 family. As to quaternary structure, part of the 30S ribosomal subunit. Contacts protein S5. The interaction surface between S4 and S5 is involved in control of translational fidelity.

It is found in the plastid. It localises to the chloroplast. Its function is as follows. One of the primary rRNA binding proteins, it binds directly to 16S rRNA where it nucleates assembly of the body of the 30S subunit. Functionally, with S5 and S12 plays an important role in translational accuracy. The protein is Small ribosomal subunit protein uS4c (rps4) of Gracilaria tenuistipitata var. liui (Red alga).